A 424-amino-acid polypeptide reads, in one-letter code: Protein TUNICAMYCIN INDUCED 1 (424 aa).

Residues 1–25 form the signal peptide; sequence MGHRVLVYVGALFLILFTIFPSSSA. 3 N-linked (GlcNAc...) asparagine glycosylation sites follow: asparagine 197, asparagine 296, and asparagine 406.

In terms of tissue distribution, restricted to pollen grains at high levels.

It localises to the endoplasmic reticulum. Involved in the regulation of pollen surface morphology, probably by modulating the secretion of proteins and/or lipids during pollen development. The sequence is that of Protein TUNICAMYCIN INDUCED 1 from Arabidopsis thaliana (Mouse-ear cress).